The primary structure comprises 481 residues: Inosine-5'-monophosphate dehydrogenase (481 aa).

CBS domains follow at residues 92-148 and 152-209; these read VIND…SKKV and MTKM…PEAN. NAD(+)-binding positions include aspartate 244 and 293 to 295; that span reads GIG. Residues glycine 295 and glycine 297 each coordinate K(+). Residue serine 298 coordinates IMP. Cysteine 300 is a K(+) binding site. The active-site Thioimidate intermediate is the cysteine 300. Residues 333 to 335, 356 to 357, and 380 to 384 each bind IMP; these read DGG, GS, and YRGMG. Catalysis depends on arginine 396, which acts as the Proton acceptor. Glutamate 410 provides a ligand contact to IMP. Residues glutamate 464, serine 465, and histidine 466 each coordinate K(+).

The protein belongs to the IMPDH/GMPR family. Homotetramer. The cofactor is K(+).

The catalysed reaction is IMP + NAD(+) + H2O = XMP + NADH + H(+). It participates in purine metabolism; XMP biosynthesis via de novo pathway; XMP from IMP: step 1/1. Its activity is regulated as follows. Mycophenolic acid (MPA) is a non-competitive inhibitor that prevents formation of the closed enzyme conformation by binding to the same site as the amobile flap. In contrast, mizoribine monophosphate (MZP) is a competitive inhibitor that induces the closed conformation. MPA is a potent inhibitor of mammalian IMPDHs but a poor inhibitor of the bacterial enzymes. MZP is a more potent inhibitor of bacterial IMPDH. In terms of biological role, catalyzes the conversion of inosine 5'-phosphate (IMP) to xanthosine 5'-phosphate (XMP), the first committed and rate-limiting step in the de novo synthesis of guanine nucleotides, and therefore plays an important role in the regulation of cell growth. The chain is Inosine-5'-monophosphate dehydrogenase from Helicobacter pylori (strain J99 / ATCC 700824) (Campylobacter pylori J99).